The following is a 184-amino-acid chain: Thymidine kinase (184 aa).

ATP contacts are provided by residues 15-22 and 89-92; these read GPMFSGKS and DEIQ. The active-site Proton acceptor is the Glu-90. Zn(2+)-binding residues include Cys-146, Cys-149, Cys-178, and Cys-181.

The protein belongs to the thymidine kinase family. In terms of assembly, homotetramer.

It is found in the cytoplasm. It carries out the reaction thymidine + ATP = dTMP + ADP + H(+). The protein is Thymidine kinase of Mesomycoplasma hyopneumoniae (strain 232) (Mycoplasma hyopneumoniae).